Here is a 216-residue protein sequence, read N- to C-terminus: Protein Syd (216 aa).

It belongs to the Syd family.

Its subcellular location is the cell inner membrane. Interacts with the SecY protein in vivo. May bind preferentially to an uncomplexed state of SecY, thus functioning either as a chelating agent for excess SecY in the cell or as a regulatory factor that negatively controls the translocase function. The sequence is that of Protein Syd from Shewanella baltica (strain OS155 / ATCC BAA-1091).